Here is a 1413-residue protein sequence, read N- to C-terminus: DNA-directed RNA polymerase subunit beta' (1413 aa).

Residues Cys-70, Cys-72, Cys-85, and Cys-88 each contribute to the Zn(2+) site. 3 residues coordinate Mg(2+): Asp-460, Asp-462, and Asp-464. Residues Cys-819, Cys-893, Cys-900, and Cys-903 each coordinate Zn(2+). Positions 1392 to 1413 (EEAFDFGTPSAPAEEPQHPAAE) are disordered.

It belongs to the RNA polymerase beta' chain family. As to quaternary structure, the RNAP catalytic core consists of 2 alpha, 1 beta, 1 beta' and 1 omega subunit. When a sigma factor is associated with the core the holoenzyme is formed, which can initiate transcription. The cofactor is Mg(2+). It depends on Zn(2+) as a cofactor.

The enzyme catalyses RNA(n) + a ribonucleoside 5'-triphosphate = RNA(n+1) + diphosphate. Functionally, DNA-dependent RNA polymerase catalyzes the transcription of DNA into RNA using the four ribonucleoside triphosphates as substrates. The sequence is that of DNA-directed RNA polymerase subunit beta' from Burkholderia cenocepacia (strain ATCC BAA-245 / DSM 16553 / LMG 16656 / NCTC 13227 / J2315 / CF5610) (Burkholderia cepacia (strain J2315)).